Reading from the N-terminus, the 1159-residue chain is RAD51-associated protein 2 (1159 aa).

The disordered stretch occupies residues 1-35 (MSLPQPTPRMAELRKPTSSLTPPEDPDSQPPSSKR). Residues 1111 to 1159 (SHFPHGISRVRPLKTCSRPIRIGLSRKARIKQLHPYLKQMCYGNLKENF) form an interaction with RAD51 region.

In terms of assembly, interacts with RAD51. As to expression, specifically expressed in meiotic tissues. Highly expressed in testis.

In Homo sapiens (Human), this protein is RAD51-associated protein 2 (RAD51AP2).